A 245-amino-acid chain; its full sequence is tRNA pseudouridine synthase A (245 aa).

D52 serves as the catalytic Nucleophile. Residue Y112 coordinates substrate.

It belongs to the tRNA pseudouridine synthase TruA family. In terms of assembly, homodimer.

It catalyses the reaction uridine(38/39/40) in tRNA = pseudouridine(38/39/40) in tRNA. Functionally, formation of pseudouridine at positions 38, 39 and 40 in the anticodon stem and loop of transfer RNAs. This chain is tRNA pseudouridine synthase A, found in Dictyoglomus thermophilum (strain ATCC 35947 / DSM 3960 / H-6-12).